The primary structure comprises 331 residues: Phenylalanine--tRNA ligase alpha subunit (331 aa).

Glu258 lines the Mg(2+) pocket.

This sequence belongs to the class-II aminoacyl-tRNA synthetase family. Phe-tRNA synthetase alpha subunit type 1 subfamily. Tetramer of two alpha and two beta subunits. Mg(2+) is required as a cofactor.

It localises to the cytoplasm. It catalyses the reaction tRNA(Phe) + L-phenylalanine + ATP = L-phenylalanyl-tRNA(Phe) + AMP + diphosphate + H(+). The chain is Phenylalanine--tRNA ligase alpha subunit (pheS) from Synechocystis sp. (strain ATCC 27184 / PCC 6803 / Kazusa).